We begin with the raw amino-acid sequence, 200 residues long: MGKTIGLTGSVATGKSTVSNLIQQAGIPLVDADIAARKVVEKGTDGLAEIVAYFGKDILLEDGTLNRAKLGEIIFQDKEKREKLNEITHPRVKDYMLNERERFFEAGEKVVFFDIPLLFESHLESLVDQIIVVWTTPETELKRLMERNNLTKEEALARINSQMGIDEKAKKADFVIDNNESLEKTQKQVLTFIERFVNNK.

In terms of domain architecture, DPCK spans 4–200 (TIGLTGSVAT…TFIERFVNNK (197 aa)). 12–17 (ATGKST) provides a ligand contact to ATP.

It belongs to the CoaE family.

It is found in the cytoplasm. The catalysed reaction is 3'-dephospho-CoA + ATP = ADP + CoA + H(+). It participates in cofactor biosynthesis; coenzyme A biosynthesis; CoA from (R)-pantothenate: step 5/5. In terms of biological role, catalyzes the phosphorylation of the 3'-hydroxyl group of dephosphocoenzyme A to form coenzyme A. This is Dephospho-CoA kinase from Listeria innocua serovar 6a (strain ATCC BAA-680 / CLIP 11262).